Here is a 299-residue protein sequence, read N- to C-terminus: Nucleotide-binding protein SAV_6292 (299 aa).

23–30 (GMSGAGRS) is an ATP binding site. Position 74-77 (74-77 (DVRG)) interacts with GTP.

Belongs to the RapZ-like family.

Displays ATPase and GTPase activities. In Streptomyces avermitilis (strain ATCC 31267 / DSM 46492 / JCM 5070 / NBRC 14893 / NCIMB 12804 / NRRL 8165 / MA-4680), this protein is Nucleotide-binding protein SAV_6292.